The primary structure comprises 377 residues: Succinyl-diaminopimelate desuccinylase (377 aa).

Residue H68 coordinates Zn(2+). D70 is an active-site residue. Zn(2+) is bound at residue D101. E135 functions as the Proton acceptor in the catalytic mechanism. Residues E136, E164, and H350 each contribute to the Zn(2+) site.

Belongs to the peptidase M20A family. DapE subfamily. As to quaternary structure, homodimer. It depends on Zn(2+) as a cofactor. Co(2+) serves as cofactor.

The enzyme catalyses N-succinyl-(2S,6S)-2,6-diaminopimelate + H2O = (2S,6S)-2,6-diaminopimelate + succinate. It participates in amino-acid biosynthesis; L-lysine biosynthesis via DAP pathway; LL-2,6-diaminopimelate from (S)-tetrahydrodipicolinate (succinylase route): step 3/3. Its function is as follows. Catalyzes the hydrolysis of N-succinyl-L,L-diaminopimelic acid (SDAP), forming succinate and LL-2,6-diaminopimelate (DAP), an intermediate involved in the bacterial biosynthesis of lysine and meso-diaminopimelic acid, an essential component of bacterial cell walls. This chain is Succinyl-diaminopimelate desuccinylase, found in Acinetobacter baumannii (strain AB307-0294).